Consider the following 162-residue polypeptide: Gas vesicle protein I (162 aa).

The interval 1–162 (MTGKQHQKHE…AERQRGGADE (162 aa)) is disordered. 2 stretches are compositionally biased toward basic and acidic residues: residues 22 to 37 (INRD…QREK) and 47 to 64 (RQSE…HDTQ). Composition is skewed to polar residues over residues 65–74 (SETQRGTQSK) and 81–110 (TGGT…SHST). 2 stretches are compositionally biased toward basic and acidic residues: residues 122-142 (ARER…EDKS) and 151-162 (PKAERQRGGADE).

It belongs to the gas vesicle GvpI family. GvpF to GvpM interact with each other in vitro, and may form multi-subunit complex(es). Interacts with GvpC and GvpO.

The protein localises to the gas vesicle. In terms of biological role, proteins GvpF to GvpM might be involved in nucleating gas vesicle formation. A minor component of the gas vesicle. Gas vesicles are hollow, gas filled proteinaceous nanostructures found in some microorganisms. They allow positioning of halobacteria at the optimal depth for growth in the poorly aerated, shallow brine pools of their habitat. Its function is as follows. Expression of a 9.5 kb mc-vac DNA fragment containing 2 divergently transcribed regions (gvpD-gvpE-gvpF-gvpG-gvpH-gvpI-gvpJ-gvpK-gvpL-gvpM and gvpA-gvpC-gvpN-gvpO) allows H.volcanii to produce gas vesicles. The chain is Gas vesicle protein I from Haloferax mediterranei (strain ATCC 33500 / DSM 1411 / JCM 8866 / NBRC 14739 / NCIMB 2177 / R-4) (Halobacterium mediterranei).